Reading from the N-terminus, the 297-residue chain is Methionyl-tRNA formyltransferase (297 aa).

The tract at residues 31–52 (QPPRAAGRGQKPRPSPVHRAAE) is disordered. 108-111 (SLLP) is a binding site for (6S)-5,6,7,8-tetrahydrofolate.

Belongs to the Fmt family.

The enzyme catalyses L-methionyl-tRNA(fMet) + (6R)-10-formyltetrahydrofolate = N-formyl-L-methionyl-tRNA(fMet) + (6S)-5,6,7,8-tetrahydrofolate + H(+). In terms of biological role, attaches a formyl group to the free amino group of methionyl-tRNA(fMet). The formyl group appears to play a dual role in the initiator identity of N-formylmethionyl-tRNA by promoting its recognition by IF2 and preventing the misappropriation of this tRNA by the elongation apparatus. This is Methionyl-tRNA formyltransferase from Paracoccus denitrificans (strain Pd 1222).